The sequence spans 156 residues: Endoribonuclease YbeY (156 aa).

Residues histidine 122, histidine 126, and histidine 132 each contribute to the Zn(2+) site.

This sequence belongs to the endoribonuclease YbeY family. Zn(2+) serves as cofactor.

It is found in the cytoplasm. Single strand-specific metallo-endoribonuclease involved in late-stage 70S ribosome quality control and in maturation of the 3' terminus of the 16S rRNA. The protein is Endoribonuclease YbeY of Bacillus cereus (strain B4264).